A 249-amino-acid polypeptide reads, in one-letter code: General transcription factor IIF subunit 2 (249 aa).

Residue A2 is modified to N-acetylalanine. K22, K33, and K137 each carry N6-acetyllysine. S142 carries the post-translational modification Phosphoserine. G227 and H229 together coordinate DNA. S248 carries the phosphoserine modification.

Belongs to the TFIIF beta subunit family. In terms of assembly, heterodimer of an alpha and a beta subunit. Interacts with HTATSF1 and GPBP1. Interacts with URI1. Interacts with GTF2B (via N-terminus); this interaction is inhibited in presence of GTF2F1. Part of TBP-based Pol II pre-initiation complex (PIC), in which Pol II core assembles with general transcription factors and other specific initiation factors including GTF2E1, GTF2E2, GTF2F1, GTF2F2, TCEA1, ERCC2, ERCC3, GTF2H2, GTF2H3, GTF2H4, GTF2H5, GTF2A1, GTF2A2, GTF2B and TBP; this large multi-subunit PIC complex mediates DNA unwinding and targets Pol II core to the transcription start site where the first phosphodiester bond forms.

It localises to the nucleus. Functionally, TFIIF is a general transcription initiation factor that binds to RNA polymerase II and helps to recruit it to the initiation complex in collaboration with TFIIB. In Bos taurus (Bovine), this protein is General transcription factor IIF subunit 2 (GTF2F2).